Here is a 252-residue protein sequence, read N- to C-terminus: GTP cyclohydrolase 1 type 2 homolog (252 aa).

His-65, His-66, Asp-103, His-220, and Glu-224 together coordinate a divalent metal cation.

The protein belongs to the GTP cyclohydrolase I type 2/NIF3 family. As to quaternary structure, homohexamer.

This is GTP cyclohydrolase 1 type 2 homolog from Pseudomonas aeruginosa (strain ATCC 15692 / DSM 22644 / CIP 104116 / JCM 14847 / LMG 12228 / 1C / PRS 101 / PAO1).